The primary structure comprises 150 residues: Large ribosomal subunit protein uL13 (150 aa).

Positions 129–150 are disordered; the sequence is PEHPHSAQRPQTLQLNPAASSQ. Over residues 136 to 150 the composition is skewed to polar residues; the sequence is QRPQTLQLNPAASSQ.

The protein belongs to the universal ribosomal protein uL13 family. As to quaternary structure, part of the 50S ribosomal subunit.

This protein is one of the early assembly proteins of the 50S ribosomal subunit, although it is not seen to bind rRNA by itself. It is important during the early stages of 50S assembly. The sequence is that of Large ribosomal subunit protein uL13 from Prochlorococcus marinus (strain MIT 9303).